Reading from the N-terminus, the 409-residue chain is AT-rich interactive domain-containing protein 3C (409 aa).

The segment covering 1-14 (MEALQRQQAARLAQ) has biased composition (low complexity). The segment at 1 to 91 (MEALQRQQAA…SPSSQSPGIQ (91 aa)) is disordered. Positions 19–30 (LAPPRLPLPQPP) are enriched in pro residues. The span at 49–70 (AEEEEGAEDEEGETPLAEEETA) shows a compositional bias: acidic residues. The region spanning 110 to 202 (DPKRKEFLDD…YLYPYECETR (93 aa)) is the ARID domain. Disordered stretches follow at residues 233 to 274 (NLAG…PAHA), 306 to 333 (TREK…RLGA), and 385 to 409 (PVPA…STLP). Residues 235–257 (AGPTPRGAPGPASSHGPAPTATP) show a composition bias toward low complexity. The REKLES domain maps to 301 to 386 (LASEATREKL…GILFARRQPV (86 aa)). Residues 306 to 320 (TREKLAPEEPPEKRA) are compositionally biased toward basic and acidic residues. Residues 393–402 (TNPPPLPSTG) show a composition bias toward pro residues.

In terms of assembly, interacts (via REKLES DOMAIN) with NPM1; the interaction mediates ARID3C nuclear shuttling.

The protein resides in the nucleus. Functionally, transcription factor involved in monocyte-to-macrophage differentiation. Forms a complex with NPM1 to translocate to the nucleus, acting as a transcription factor that promotes the expression of the genes involved in macrophage differentiation, such as STAT3, STAT1 and JUNB. In Mus musculus (Mouse), this protein is AT-rich interactive domain-containing protein 3C (Arid3c).